A 239-amino-acid chain; its full sequence is Flagellar L-ring protein (239 aa).

Positions 1 to 16 (MKPVILATASALLLAA) are cleaved as a signal peptide. A lipid anchor (N-palmitoyl cysteine) is attached at Cys-17. Cys-17 is lipidated: S-diacylglycerol cysteine. Residues 120-138 (SGSTSGSASGNLGLTGDTS) show a composition bias toward polar residues. The disordered stretch occupies residues 120–145 (SGSTSGSASGNLGLTGDTSTDGKGKI).

It belongs to the FlgH family. As to quaternary structure, the basal body constitutes a major portion of the flagellar organelle and consists of four rings (L,P,S, and M) mounted on a central rod.

The protein localises to the cell outer membrane. Its subcellular location is the bacterial flagellum basal body. Functionally, assembles around the rod to form the L-ring and probably protects the motor/basal body from shearing forces during rotation. The protein is Flagellar L-ring protein of Azorhizobium caulinodans (strain ATCC 43989 / DSM 5975 / JCM 20966 / LMG 6465 / NBRC 14845 / NCIMB 13405 / ORS 571).